The sequence spans 168 residues: G/U mismatch-specific DNA glycosylase (168 aa).

Belongs to the uracil-DNA glycosylase (UDG) superfamily. TDG/mug family. In terms of assembly, binds DNA as a monomer.

The protein localises to the cytoplasm. The catalysed reaction is Specifically hydrolyzes mismatched double-stranded DNA and polynucleotides, releasing free uracil.. In terms of biological role, excises ethenocytosine and uracil, which can arise by alkylation or deamination of cytosine, respectively, from the corresponding mispairs with guanine in ds-DNA. It is capable of hydrolyzing the carbon-nitrogen bond between the sugar-phosphate backbone of the DNA and the mispaired base. The complementary strand guanine functions in substrate recognition. Required for DNA damage lesion repair in stationary-phase cells. The polypeptide is G/U mismatch-specific DNA glycosylase (Escherichia coli O9:H4 (strain HS)).